Reading from the N-terminus, the 99-residue chain is UPF0235 protein HS_1657 (99 aa).

The protein belongs to the UPF0235 family.

The protein is UPF0235 protein HS_1657 of Histophilus somni (strain 129Pt) (Haemophilus somnus).